The chain runs to 1301 residues: MPRPQHHALLRAMLKLLLFASIAEHCATALPTNSSNSPSSPSPFTVASLPPTTASSSSSPAVISTSSFDRNLADLVNPEAETSGSGWESLETEFNLATTVDSSTQKTAKEPVLGTAATSIEQQDQPPDVPATTLAFANAFPVPVAGEMGNGNGNYNDATPPYAAVDDNYVPSKPQNLTILDVSANSITMSWHPPKNQNGAIAGYHVFHIHDNQTGVEIVKNSRNSVETLIHFELQNLRPYTDYRVIVKAFTTKNEGEPSDQIAQRTDVGGPSAPAIVNLTCHSQESITIRWRRPYEFYNTIDFYIIKTRLAGQDTHRDIRINASAKELETAMILQNLTTNSYYEVKVAAATFSVINPKKIVLGKFSESRIIQLQPNCEKLQPLLRQSHNDYNLAVLVGIIFSCFGIILIIMAFFLWSRKCFHAAYYYLDDPPHHPNAPQVDWEVPVKIGDEIRAAVPVNEFAKHVASLHADGDIGFSREYEAIQNECISDDLPCEHSQHPENKRKNRYLNITAYDHSRVHLHPTPGQKKNLDYINANFIDGYQKGHAFIGTQGPLPDTFDCFWRMIWEQRVAIIVMITNLVERGRRKCDMYWPKDGVETYGVIQVKLIEEEVMSTYTVRTLQIKHLKLKKKKQCNTEKLVYQYHYTNWPDHGTPDHPLPVLNFVKKSSAANPAEAGPIVVHCSAGVGRTGTYIVLDAMLKQIQQKNIVNVFGFLRHIRAQRNFLVQTEEQYIFLHDALVEAIASGETNLMAEQVEELKNCTPYLEQQYKNIIQFQPKDIHIASAMKQVNSIKNRGAIFPIEGSRVHLTPKPGEDGSDYINASWLHGFRRLRDFIVTQHPMAHTIKDFWQMVWDHNAQTVVLLSSLDDINFAQFWPDEATPIESDHYRVKFLNKTNKSDYVSRDFVIQSIQDDYELTVKMLHCPSWPEMSNPNSIYDFIVDVHERCNDYRNGPIVIVDRYGGAQACTFCAISSLAIEMEYCSTANVYQYAKLYHNKRPGVWTSSEDIRVIYNILSFLPGNLNLLKRTALRTEFEDVTTATPDLYSKICSNGNVPQHVILQQQQLHMLQLQQQHLETQQQQQQQQQQQQQQQQTALNETVSTPSTDTNPSLLPILSLLPPTVAPLSSSSSTTPPTPSTPTPQPPQTIQLSSHSPSDLSHQISSTVANAASPVTPATASASAGATPTTPMTPTVPPTIPTIPSLASQNSLTLTNANFHTVTNNAADLMEHQQQQMLALMQQQTQLQQQYNTHPQQHHNNVGDLLMNNADNSPTASPTITNNNHITNNNVTSAAATDAQNLDIVG.

Residues 1-28 form the signal peptide; that stretch reads MPRPQHHALLRAMLKLLLFASIAEHCAT. At 29–394 the chain is on the extracellular side; it reads ALPTNSSNSP…RQSHNDYNLA (366 aa). Residues 31–63 form a disordered region; the sequence is PTNSSNSPSSPSPFTVASLPPTTASSSSSPAVI. A glycan (N-linked (GlcNAc...) asparagine) is linked at N33. The segment covering 33-63 has biased composition (low complexity); that stretch reads NSSNSPSSPSPFTVASLPPTTASSSSSPAVI. 3 Fibronectin type-III domains span residues 66 to 165, 173 to 269, and 270 to 376; these read SSFD…YAAV, KPQN…TDVG, and GPSA…LQPN. 5 N-linked (GlcNAc...) asparagine glycosylation sites follow: N176, N212, N278, N322, and N336. Residues 395 to 415 form a helical membrane-spanning segment; sequence VLVGIIFSCFGIILIIMAFFL. Residues 416–1301 are Cytoplasmic-facing; the sequence is WSRKCFHAAY…TDAQNLDIVG (886 aa). Tyrosine-protein phosphatase domains follow at residues 476-741 and 764-1016; these read FSRE…LVEA and LEQQ…LSFL. C682 serves as the catalytic Phosphocysteine intermediate. Polar residues predominate over residues 1092–1106; that stretch reads TALNETVSTPSTDTN. 2 disordered regions span residues 1092–1199 and 1257–1281; these read TALN…PTIP and VGDL…NNHI. Positions 1107–1130 are enriched in low complexity; that stretch reads PSLLPILSLLPPTVAPLSSSSSTT. Residues 1131 to 1142 show a composition bias toward pro residues; sequence PPTPSTPTPQPP. A compositionally biased stretch (polar residues) spans 1150–1161; that stretch reads HSPSDLSHQISS. Low complexity predominate over residues 1162–1188; the sequence is TVANAASPVTPATASASAGATPTTPMT. The segment covering 1264 to 1273 has biased composition (polar residues); the sequence is NADNSPTASP.

This sequence belongs to the protein-tyrosine phosphatase family. Receptor class subfamily. As to expression, selectively expressed in a subset of axons and pioneer neurons (including aCC and RP2) in the embryo.

It is found in the membrane. It carries out the reaction O-phospho-L-tyrosyl-[protein] + H2O = L-tyrosyl-[protein] + phosphate. Functionally, may play a key role in signal transduction and growth control. May have a role in the establishment of the intersegmental and segmental nerves. The chain is Tyrosine-protein phosphatase 99A (Ptp99A) from Drosophila melanogaster (Fruit fly).